The primary structure comprises 317 residues: uncharacterized protein (317 aa).

The protein belongs to the asfivirus F317L family.

Its subcellular location is the virion. This is an uncharacterized protein from African swine fever virus (isolate Tick/South Africa/Pretoriuskop Pr4/1996) (ASFV).